A 261-amino-acid chain; its full sequence is Protein FAM216A (261 aa).

Residues 1–52 (MPSRCPGVAGPPALARTEGSEGSAGQSYHQNSKGTGEQHKAERIKEGHRMSS) form a disordered region. The span at 23-35 (SAGQSYHQNSKGT) shows a compositional bias: polar residues. A compositionally biased stretch (basic and acidic residues) spans 36–49 (GEQHKAERIKEGHR).

It belongs to the FAM216 family.

The sequence is that of Protein FAM216A (Fam216a) from Rattus norvegicus (Rat).